Here is a 499-residue protein sequence, read N- to C-terminus: MLLKPGNKLVSPETSHHRDSASNSSNHKCQQQKPRKDKQKQVEQNTKKIEEHQIKSESTLLISNHNVNMSSQSNNSESTSTNNSSKPHTGGDIRWDAVNSLKSRGIKLGISDFRVLKRLGYGDIGSVYLVELKGANPTTYFAMKVMDKASLVSRNKLLRAQTEREILSQLDHPFLPTLYSHFETDKFYCLVMEFCSGGNLYSLRQKQPNKCFTEDAARFFASEVLLALEYLHMLGIVYRDLKPENVLVRDDGHIMLSDFDLSLRCSVNPTLVKSFNGGGTTGIIDDNAAVQGCYQPSAFFPRMLQSSKKNRKSKSDFDGSLPELMAEPTNVKSMSFVGTHEYLAPEIIKNEGHGSAVDWWTFGIFIYELLHGATPFKGQGNKATLYNVIGQPLRFPEYSQVSSTAKDLIKGLLVKEPQNRIAYKRGATEIKQHPFFEGVNWALIRGETPPHLPEPVDFSCYVKKEKESLPPAATEKKSKMFDEANKSGSDPDYIVFEYF.

A disordered region spans residues 1–92 (MLLKPGNKLV…NSSKPHTGGD (92 aa)). Over residues 39 to 55 (QKQVEQNTKKIEEHQIK) the composition is skewed to basic and acidic residues. A compositionally biased stretch (low complexity) spans 63-85 (SNHNVNMSSQSNNSESTSTNNSS). Positions 113–436 (FRVLKRLGYG…ATEIKQHPFF (324 aa)) constitute a Protein kinase domain. Residues 119–127 (LGYGDIGSV) and Lys-144 each bind ATP. Asp-240 acts as the Proton acceptor in catalysis. Positions 437 to 499 (EGVNWALIRG…DPDYIVFEYF (63 aa)) constitute an AGC-kinase C-terminal domain.

It belongs to the protein kinase superfamily. AGC Ser/Thr protein kinase family. In terms of assembly, interacts with PDPK1/PDK1. Autophosphorylated and phosphorylated by PDPK1/PDK1. As to expression, specifically expressed in root hair cells.

It carries out the reaction L-seryl-[protein] + ATP = O-phospho-L-seryl-[protein] + ADP + H(+). The catalysed reaction is L-threonyl-[protein] + ATP = O-phospho-L-threonyl-[protein] + ADP + H(+). With respect to regulation, activated by PDPK1/PDK1. Involved in root hair growth and morphogenesis. This chain is Serine/threonine-protein kinase RHS3, found in Arabidopsis thaliana (Mouse-ear cress).